A 412-amino-acid polypeptide reads, in one-letter code: Putative competence-damage inducible protein (412 aa).

It belongs to the CinA family.

The chain is Putative competence-damage inducible protein from Bacillus cereus (strain ATCC 14579 / DSM 31 / CCUG 7414 / JCM 2152 / NBRC 15305 / NCIMB 9373 / NCTC 2599 / NRRL B-3711).